Reading from the N-terminus, the 719-residue chain is Protein Hook homolog 2 (719 aa).

The required for localization to the centrosome and induction of aggresome formation stretch occupies residues 1–161 (MSVDKAELCG…ELMTKDTPDS (161 aa)). The interval 1-548 (MSVDKAELCG…LKRKLEEHLQ (548 aa)) is sufficient for interaction with microtubules. A Calponin-homology (CH) domain is found at 6–122 (AELCGSLLTW…KLLQLVLGCA (117 aa)). At S163 the chain carries Phosphoserine. Coiled coils occupy residues 180-427 (LSEE…AQLQ) and 455-607 (AELR…VDKA). Position 230 is a phosphothreonine (T230). Residues 533 to 719 (DAISILLKRK…SLNLRPTDKH (187 aa)) are required for localization to the centrosome and induction of aggresome formation. The interval 584–719 (HNLQKKDADL…SLNLRPTDKH (136 aa)) is sufficient for interaction with CNTRL. Positions 696 to 719 (LATNSRRGPLGRLASLNLRPTDKH) are disordered. Phosphoserine is present on S710.

The protein belongs to the hook family. Self-associates. Component of the FTS/Hook/FHIP complex (FHF complex), composed of AKTIP/FTS, FHIP1B, and one or more members of the Hook family of proteins HOOK1, HOOK2, and HOOK3. May interact directly with AKTIP/FTS, HOOK1 and HOOK3. Associates with several subunits of the homotypic vesicular sorting complex (the HOPS complex) including VPS16 and VPS41; these interactions may be indirect. Interacts with CNTRL. Interacts with microtubules. Interacts with ZC3H14. Interacts with LRGUK (via guanylate kinase-like domain). Interacts with CCDC181. Interacts with AP4M1; the interaction is direct, mediates the interaction between FTS-Hook-FHIP (FHF) complex and AP-4 and the perinuclear distribution of AP-4.

The protein localises to the cytoplasm. The protein resides in the cytoskeleton. Its subcellular location is the microtubule organizing center. It localises to the centrosome. It is found in the golgi apparatus. The protein localises to the trans-Golgi network. In terms of biological role, component of the FTS/Hook/FHIP complex (FHF complex). The FHF complex may function to promote vesicle trafficking and/or fusion via the homotypic vesicular protein sorting complex (the HOPS complex). Contributes to the establishment and maintenance of centrosome function. May function in the positioning or formation of aggresomes, which are pericentriolar accumulations of misfolded proteins, proteasomes and chaperones. FHF complex promotes the distribution of AP-4 complex to the perinuclear area of the cell. This is Protein Hook homolog 2 (HOOK2) from Homo sapiens (Human).